The following is a 455-amino-acid chain: Bifunctional protein GlmU (455 aa).

The tract at residues 1–226 (MGLSVVILAA…EFEILGVNDR (226 aa)) is pyrophosphorylase. UDP-N-acetyl-alpha-D-glucosamine is bound by residues 8–11 (LAAG), lysine 22, glutamine 73, 78–79 (GT), 99–101 (YGD), glycine 136, glutamate 151, asparagine 166, and asparagine 224. Aspartate 101 provides a ligand contact to Mg(2+). Asparagine 224 lines the Mg(2+) pocket. The segment at 227–247 (TQLASLERVWQRNVAEKIMAK) is linker. Residues 248–455 (GVSIADPNRF…WQRPVKKTDK (208 aa)) are N-acetyltransferase. Residues arginine 330 and lysine 348 each coordinate UDP-N-acetyl-alpha-D-glucosamine. Catalysis depends on histidine 360, which acts as the Proton acceptor. Positions 363 and 374 each coordinate UDP-N-acetyl-alpha-D-glucosamine. Acetyl-CoA-binding positions include alanine 377, 383 to 384 (NY), serine 402, alanine 420, and arginine 437.

It in the N-terminal section; belongs to the N-acetylglucosamine-1-phosphate uridyltransferase family. This sequence in the C-terminal section; belongs to the transferase hexapeptide repeat family. Homotrimer. The cofactor is Mg(2+).

Its subcellular location is the cytoplasm. It carries out the reaction alpha-D-glucosamine 1-phosphate + acetyl-CoA = N-acetyl-alpha-D-glucosamine 1-phosphate + CoA + H(+). The enzyme catalyses N-acetyl-alpha-D-glucosamine 1-phosphate + UTP + H(+) = UDP-N-acetyl-alpha-D-glucosamine + diphosphate. The protein operates within nucleotide-sugar biosynthesis; UDP-N-acetyl-alpha-D-glucosamine biosynthesis; N-acetyl-alpha-D-glucosamine 1-phosphate from alpha-D-glucosamine 6-phosphate (route II): step 2/2. Its pathway is nucleotide-sugar biosynthesis; UDP-N-acetyl-alpha-D-glucosamine biosynthesis; UDP-N-acetyl-alpha-D-glucosamine from N-acetyl-alpha-D-glucosamine 1-phosphate: step 1/1. It functions in the pathway bacterial outer membrane biogenesis; LPS lipid A biosynthesis. Functionally, catalyzes the last two sequential reactions in the de novo biosynthetic pathway for UDP-N-acetylglucosamine (UDP-GlcNAc). The C-terminal domain catalyzes the transfer of acetyl group from acetyl coenzyme A to glucosamine-1-phosphate (GlcN-1-P) to produce N-acetylglucosamine-1-phosphate (GlcNAc-1-P), which is converted into UDP-GlcNAc by the transfer of uridine 5-monophosphate (from uridine 5-triphosphate), a reaction catalyzed by the N-terminal domain. In Francisella tularensis subsp. novicida (strain U112), this protein is Bifunctional protein GlmU.